A 587-amino-acid chain; its full sequence is Transport inhibitor response 1-like protein Os05g0150500 (587 aa).

In terms of domain architecture, F-box spans 6–63 (SRAACAAAAPPWHSLPDEVWEHAFSFLPAAADRGAAAGACSSWLRAERRSRRRLAVAN). 1D-myo-inositol hexakisphosphate is bound at residue Lys85. Residues 92-93 (DF) form an interaction with auxin-responsive proteins region. Residues 124-125 (KR) and Arg355 each bind 1D-myo-inositol hexakisphosphate. An interaction with auxin-responsive proteins region spans residues 358–363 (PSDPFG). Position 409 to 411 (409 to 411 (CFR)) interacts with 1D-myo-inositol hexakisphosphate. Positions 413 to 417 (CILEP) are interaction with auxin-responsive proteins. Arg444 lines the 1D-myo-inositol hexakisphosphate pocket. The interaction with auxin-responsive proteins stretch occupies residues 472–473 (AF). 1D-myo-inositol hexakisphosphate-binding positions include 492 to 493 (KK) and Arg517.

As to quaternary structure, part of a SCF (SKP1-cullin-F-box) protein ligase complex. May interact with auxin and auxin-responsive proteins.

Its subcellular location is the nucleus. Its pathway is protein modification; protein ubiquitination. The polypeptide is Transport inhibitor response 1-like protein Os05g0150500 (Oryza sativa subsp. japonica (Rice)).